Consider the following 545-residue polypeptide: Ubiquitin carboxyl-terminal hydrolase 17-like protein C (545 aa).

Residues 51–348 (CGLQNTGNSC…NAYVLFYVQQ (298 aa)) enclose the USP domain. The Nucleophile role is filled by cysteine 60. The Proton acceptor role is filled by histidine 307. 2 disordered regions span residues 368–442 (DPEY…QKLG) and 489–539 (WGRD…KQGQ). Positions 374-385 (KKSRRKKHKKKS) are enriched in basic residues. Composition is skewed to basic and acidic residues over residues 393 to 404 (EPCKNREKRATK) and 489 to 505 (WGRD…HNAD). Residues 508 to 519 (LTSQDPVNTGQL) show a composition bias toward polar residues. Over residues 524 to 537 (GRRRSKKGKNKNKQ) the composition is skewed to basic residues.

It belongs to the peptidase C19 family. USP17 subfamily. As to expression, expressed in T cells.

It localises to the nucleus. It is found in the endoplasmic reticulum. The enzyme catalyses Thiol-dependent hydrolysis of ester, thioester, amide, peptide and isopeptide bonds formed by the C-terminal Gly of ubiquitin (a 76-residue protein attached to proteins as an intracellular targeting signal).. Functionally, deubiquitinating enzyme that removes conjugated ubiquitin from specific proteins to regulate different cellular processes. Important for preimplantation stage embryonic development. This is Ubiquitin carboxyl-terminal hydrolase 17-like protein C from Mus musculus (Mouse).